The chain runs to 404 residues: Deoxyguanosinetriphosphate triphosphohydrolase-like protein (404 aa).

The tract at residues 1–33 (MSVGMAAPRAAYGCDPDRSRGRQFAEPPSNNRS) is disordered. The 149-residue stretch at 69-217 (RLTHSLEVAQ…AAIADDIAYD (149 aa)) folds into the HD domain.

It belongs to the dGTPase family. Type 2 subfamily.

The sequence is that of Deoxyguanosinetriphosphate triphosphohydrolase-like protein from Rhodopseudomonas palustris (strain BisB5).